The chain runs to 503 residues: Lysine--tRNA ligase (503 aa).

Mg(2+) contacts are provided by Glu-413 and Glu-420.

This sequence belongs to the class-II aminoacyl-tRNA synthetase family. Homodimer. Mg(2+) is required as a cofactor.

It localises to the cytoplasm. It catalyses the reaction tRNA(Lys) + L-lysine + ATP = L-lysyl-tRNA(Lys) + AMP + diphosphate. This Mannheimia succiniciproducens (strain KCTC 0769BP / MBEL55E) protein is Lysine--tRNA ligase.